A 489-amino-acid chain; its full sequence is Mitochondrial-processing peptidase subunit beta (489 aa).

The N-terminal 43 residues, 1–43, are a transit peptide targeting the mitochondrion; it reads MAAAAARVVLSSAARRRLWGFSESLLIRGAAGRSLYFGENRLR. His101 lines the Zn(2+) pocket. Glu104 (proton acceptor) is an active-site residue. Zn(2+) contacts are provided by His105 and Glu181.

The protein belongs to the peptidase M16 family. As to quaternary structure, heterodimer of PMPCA (alpha) and PMPCB (beta) subunits, forming the mitochondrial processing protease (MPP) in which PMPCA is involved in substrate recognition and binding and PMPCB is the catalytic subunit. The cofactor is Zn(2+).

It localises to the mitochondrion matrix. It catalyses the reaction Release of N-terminal transit peptides from precursor proteins imported into the mitochondrion, typically with Arg in position P2.. Binding to PMPCA is required for catalytic activity. Functionally, catalytic subunit of the essential mitochondrial processing protease (MPP), which cleaves the mitochondrial sequence off newly imported precursors proteins. Preferentially, cleaves after an arginine at position P2. Required for PINK1 turnover by coupling PINK1 mitochondrial import and cleavage, which results in subsequent PINK1 proteolysis. This chain is Mitochondrial-processing peptidase subunit beta (PMPCB), found in Homo sapiens (Human).